A 210-amino-acid chain; its full sequence is 7-carboxy-7-deazaguanine synthase (210 aa).

Residues 25–27 (IQG) and Arg40 each bind substrate. One can recognise a Radical SAM core domain in the interval 31 to 210 (HTGTAAYFIR…LQTHKYLNIP (180 aa)). Positions 44, 48, and 51 each coordinate [4Fe-4S] cluster. Thr84 provides a ligand contact to substrate. Residues Gly86 and 127-129 (SPK) each bind S-adenosyl-L-methionine. Position 210 (Pro210) interacts with substrate.

This sequence belongs to the radical SAM superfamily. 7-carboxy-7-deazaguanine synthase family. Homodimer. Requires [4Fe-4S] cluster as cofactor. The cofactor is S-adenosyl-L-methionine. Mg(2+) serves as cofactor.

The enzyme catalyses 6-carboxy-5,6,7,8-tetrahydropterin + H(+) = 7-carboxy-7-deazaguanine + NH4(+). The protein operates within purine metabolism; 7-cyano-7-deazaguanine biosynthesis. Functionally, catalyzes the complex heterocyclic radical-mediated conversion of 6-carboxy-5,6,7,8-tetrahydropterin (CPH4) to 7-carboxy-7-deazaguanine (CDG), a step common to the biosynthetic pathways of all 7-deazapurine-containing compounds. The sequence is that of 7-carboxy-7-deazaguanine synthase from Flavobacterium psychrophilum (strain ATCC 49511 / DSM 21280 / CIP 103535 / JIP02/86).